Reading from the N-terminus, the 292-residue chain is Probable 2-(5''-triphosphoribosyl)-3'-dephosphocoenzyme-A synthase (292 aa).

Belongs to the CitG/MdcB family.

The enzyme catalyses 3'-dephospho-CoA + ATP = 2'-(5''-triphospho-alpha-D-ribosyl)-3'-dephospho-CoA + adenine. In Shigella sonnei (strain Ss046), this protein is Probable 2-(5''-triphosphoribosyl)-3'-dephosphocoenzyme-A synthase.